The primary structure comprises 336 residues: Tryptophan--tRNA ligase 1 (336 aa).

Residues Lys-9–Thr-11 and Gly-17–Asn-18 each bind ATP. Residues Pro-10 to Asn-18 carry the 'HIGH' region motif. Residue Asp-137 participates in L-tryptophan binding. ATP-binding positions include Gly-149–Asp-151, Val-188, and Lys-197–Ser-201. Positions Lys-197–Ser-201 match the 'KMSKS' region motif.

This sequence belongs to the class-I aminoacyl-tRNA synthetase family. Homodimer.

The protein localises to the cytoplasm. The catalysed reaction is tRNA(Trp) + L-tryptophan + ATP = L-tryptophyl-tRNA(Trp) + AMP + diphosphate + H(+). In terms of biological role, catalyzes the attachment of tryptophan to tRNA(Trp). In Streptomyces coelicolor (strain ATCC BAA-471 / A3(2) / M145), this protein is Tryptophan--tRNA ligase 1.